A 132-amino-acid chain; its full sequence is DNA-directed RNA polymerase subunit omega (132 aa).

The interval 100 to 119 (VSAEEEASHGTAGMSAEELE) is disordered.

It belongs to the RNA polymerase subunit omega family. The RNAP catalytic core consists of 2 alpha, 1 beta, 1 beta' and 1 omega subunit. When a sigma factor is associated with the core the holoenzyme is formed, which can initiate transcription.

It carries out the reaction RNA(n) + a ribonucleoside 5'-triphosphate = RNA(n+1) + diphosphate. Functionally, promotes RNA polymerase assembly. Latches the N- and C-terminal regions of the beta' subunit thereby facilitating its interaction with the beta and alpha subunits. The polypeptide is DNA-directed RNA polymerase subunit omega (Gluconacetobacter diazotrophicus (strain ATCC 49037 / DSM 5601 / CCUG 37298 / CIP 103539 / LMG 7603 / PAl5)).